The chain runs to 237 residues: Uridylate kinase (237 aa).

12–15 (KLSG) lines the ATP pocket. Positions 20-25 (GEDGLG) are involved in allosteric activation by GTP. Residue glycine 54 participates in UMP binding. Residues glycine 55 and arginine 59 each contribute to the ATP site. UMP is bound by residues aspartate 74 and 135–142 (TGNPFFTT). The ATP site is built by threonine 162, tyrosine 168, and aspartate 171.

Belongs to the UMP kinase family. Homohexamer.

The protein localises to the cytoplasm. It carries out the reaction UMP + ATP = UDP + ADP. It functions in the pathway pyrimidine metabolism; CTP biosynthesis via de novo pathway; UDP from UMP (UMPK route): step 1/1. With respect to regulation, allosterically activated by GTP. Inhibited by UTP. Functionally, catalyzes the reversible phosphorylation of UMP to UDP. In Haemophilus influenzae (strain PittEE), this protein is Uridylate kinase.